A 302-amino-acid chain; its full sequence is 4-hydroxy-tetrahydrodipicolinate synthase (302 aa).

Threonine 55 contacts pyruvate. Tyrosine 143 acts as the Proton donor/acceptor in catalysis. Residue lysine 171 is the Schiff-base intermediate with substrate of the active site. Isoleucine 213 contacts pyruvate.

It belongs to the DapA family. As to quaternary structure, homotetramer; dimer of dimers.

Its subcellular location is the cytoplasm. It catalyses the reaction L-aspartate 4-semialdehyde + pyruvate = (2S,4S)-4-hydroxy-2,3,4,5-tetrahydrodipicolinate + H2O + H(+). It functions in the pathway amino-acid biosynthesis; L-lysine biosynthesis via DAP pathway; (S)-tetrahydrodipicolinate from L-aspartate: step 3/4. Its function is as follows. Catalyzes the condensation of (S)-aspartate-beta-semialdehyde [(S)-ASA] and pyruvate to 4-hydroxy-tetrahydrodipicolinate (HTPA). In Psychrobacter sp. (strain PRwf-1), this protein is 4-hydroxy-tetrahydrodipicolinate synthase.